We begin with the raw amino-acid sequence, 274 residues long: Large ribosomal subunit protein uL2 (274 aa).

Residues 224 to 274 (VAMNPVDHPHGGGEGRTSGGRHPVTPWGIPTKGYKTRRNKRSNKLIVQKRK) are disordered. The segment covering 257–274 (YKTRRNKRSNKLIVQKRK) has biased composition (basic residues).

This sequence belongs to the universal ribosomal protein uL2 family. In terms of assembly, part of the 50S ribosomal subunit. Forms a bridge to the 30S subunit in the 70S ribosome.

Functionally, one of the primary rRNA binding proteins. Required for association of the 30S and 50S subunits to form the 70S ribosome, for tRNA binding and peptide bond formation. It has been suggested to have peptidyltransferase activity; this is somewhat controversial. Makes several contacts with the 16S rRNA in the 70S ribosome. The protein is Large ribosomal subunit protein uL2 of Francisella tularensis subsp. mediasiatica (strain FSC147).